The sequence spans 890 residues: DNA mismatch repair protein MutS (890 aa).

607–614 (GPNMSGKS) is an ATP binding site. The segment at 832-851 (ESQLSFFGGEQSSKKQDKPL) is disordered.

Belongs to the DNA mismatch repair MutS family.

Its function is as follows. This protein is involved in the repair of mismatches in DNA. It is possible that it carries out the mismatch recognition step. This protein has a weak ATPase activity. The sequence is that of DNA mismatch repair protein MutS from Bacillus cereus (strain B4264).